We begin with the raw amino-acid sequence, 362 residues long: Sphingosine 1-phosphate receptor 1 (362 aa).

Residues 1 to 25 lie on the Extracellular side of the membrane; sequence MDDLIARHYNFTGKFRKVHKDPGLK. Asparagine 10 carries an N-linked (GlcNAc...) asparagine glycan. A helical membrane pass occupies residues 26 to 47; sequence ADSVVFIIVCCFIILENVLVLL. Residues 48–61 are Cytoplasmic-facing; it reads TIWRTKKFHKPMYY. The helical transmembrane segment at 62 to 83 threads the bilayer; that stretch reads FIGNLALSDLLAGVVYTANILL. The Extracellular segment spans residues 84–95; that stretch reads SGANTYKLTPTQ. The chain crosses the membrane as a helical span at residues 96–117; it reads WFFREGSMFVALAASVFSLLAI. 99–100 is a sphing-4-enine 1-phosphate binding site; it reads RE. Residues 118–139 are Cytoplasmic-facing; the sequence is AIERHLTMLKMKLHNNGKTCRV. The helical transmembrane segment at 140–161 threads the bilayer; the sequence is FMLISTVWFIAAILGGLPVMGW. Topologically, residues 162 to 175 are extracellular; it reads NCIDSMNNCSTVLP. Cysteine 163 and cysteine 170 are joined by a disulfide. Residue asparagine 169 is glycosylated (N-linked (GlcNAc...) asparagine). Residues 176–203 form a helical membrane-spanning segment; sequence LYHKAYILFCTTVFSVILMAIVILYARI. At 204–238 the chain is on the cytoplasmic side; it reads YALVRTRSRKLVFRKVANGRGSNKSSEKSMALLKT. A helical transmembrane segment spans residues 239-259; sequence VIIVLSCFIACWAPLFILLLL. 246–250 is a sphing-4-enine 1-phosphate binding site; that stretch reads FIACW. Residues 260–270 are Extracellular-facing; it reads DVACQTLTCSI. Cysteines 263 and 268 form a disulfide. The chain crosses the membrane as a helical span at residues 271 to 291; it reads LYKAEWFLALAVLNSAMNPLI. Residues 292–362 lie on the Cytoplasmic side of the membrane; sequence YTLTSNEMRR…VSSGNITSSS (71 aa). The S-palmitoyl cysteine moiety is linked to residue cysteine 309. The disordered stretch occupies residues 328–362; the sequence is FSRSKSDNSSHPNKDEPEYSPRETIVSSGNITSSS. Basic and acidic residues predominate over residues 329–348; sequence SRSKSDNSSHPNKDEPEYSP. Polar residues predominate over residues 352–362; it reads IVSSGNITSSS.

This sequence belongs to the G-protein coupled receptor 1 family.

It localises to the cell membrane. Its function is as follows. G-protein coupled receptor for the bioactive lysosphingolipid sphingosine 1-phosphate (S1P) that seems to be coupled to the G(i) subclass of heteromeric G proteins. Signaling leads to the activation of RAC1, SRC, PTK2/FAK1 and MAP kinases. Plays an important role in cell migration, probably via its role in the reorganization of the actin cytoskeleton and the formation of lamellipodia in response to stimuli that increase the activity of the sphingosine kinase SPHK1. Required for normal chemotaxis toward sphingosine 1-phosphate. This Danio rerio (Zebrafish) protein is Sphingosine 1-phosphate receptor 1 (s1pr1).